The following is a 1196-amino-acid chain: Cingulin (1196 aa).

Positions 7–354 (MAEPRGPVDH…LVMTSGSAKG (348 aa)) are head. The short motif at 48-62 (ANTYGVAVRVQGIAG) is the ZIM element. The interval 54-67 (AVRVQGIAGQPFVV) is interaction with TJP1/ZO1. Residues 82 to 105 (IKGTNNRGPPGALSSDSELPESTY) are disordered. Ser95, Ser96, Ser98, Ser135, Ser137, Ser140, Ser155, Ser165, and Ser214 each carry phosphoserine. The span at 95 to 105 (SSDSELPESTY) shows a compositional bias: polar residues. Positions 183–263 (NKFDSRQGGQ…NQGPLGGFSC (81 aa)) are disordered. The span at 218–231 (RLPRDTLDEREHQF) shows a compositional bias: basic and acidic residues. Positions 245 to 256 (MGNSKQSSQNQG) are enriched in polar residues. Residue Ser274 is modified to Phosphoserine. A coiled-coil region spans residues 355 to 1150 (LTGQSELSQK…ARIKTLEKDS (796 aa)). An N6-acetyllysine modification is found at Lys576. The segment covering 884–897 (AQRQAKEWATEAEK) has biased composition (basic and acidic residues). Disordered regions lie at residues 884–906 (AQRQ…SRLQ), 1023–1061 (DLKS…EERE), and 1149–1174 (DSWR…EEFD). Positions 1038–1050 (SASLSQLESQNQE) are enriched in low complexity. The span at 1051 to 1061 (LQERLQAEERE) shows a compositional bias: basic and acidic residues. The interval 1155 to 1196 (SRSAAESAQREGLSSDEEFDSVYDPSSIASLLTESNLQTSSC) is tail. Phosphoserine is present on residues Ser1168, Ser1169, and Ser1175.

It belongs to the cingulin family. Homodimer. Interacts with TJP1/ZO1 and SPEF1.

It is found in the cell junction. It localises to the tight junction. Probably plays a role in the formation and regulation of the tight junction (TJ) paracellular permeability barrier. The protein is Cingulin of Canis lupus familiaris (Dog).